Reading from the N-terminus, the 329-residue chain is MYSTECTILLIEIIFYFFAAVVVYDAIHKMANSPIFCIAVLAVVFAVSPKCFAQNYGINVPITGSLDVAVPNKTDDQIGLTSSLCIYYPNEAEIEINDNEWKNTVAQLLLTKGWPTTSVYLNGYADLQSFSNNPQLNCDYNIVLVKYDQNAGLDMSELAELLLYEWLCNEMDVNLYYYQQTSEANKWIAMGSDCTIKVCPLNTQTLGIGCQTTDVATFEQLTATEKLAIIDVVDGVNHKVNYTIATCTLKNCIRLNQRENVAIIQVGGPEIIDVSEDPMIVPKMIRATRINWKKWWQVFYTVVDYINTIIQAMSKRSRSLNTSTYFLRI.

The signal sequence occupies residues 1–53; it reads MYSTECTILLIEIIFYFFAAVVVYDAIHKMANSPIFCIAVLAVVFAVSPKCFA. An N-linked (GlcNAc...) asparagine; by host glycan is attached at N72. Intrachain disulfides connect C85–C138, C168–C252, C194–C247, and C199–C210. Ca(2+) contacts are provided by D98, Q180, G209, T217, E219, D231, V232, and D234. The N-linked (GlcNAc...) asparagine; by host glycan is linked to N241. A Ca(2+)-binding site is contributed by D304. N321 is a glycosylation site (N-linked (GlcNAc...) asparagine; by host).

This sequence belongs to the rotavirus VP7 family. As to quaternary structure, homotrimer; disulfide-linked. 2 Ca(2+) ions bound at each subunit interface in the trimer hold the trimer together. Interacts with the intermediate capsid protein VP6. Interacts with the outer capsid protein VP5*. N-glycosylated. Post-translationally, the N-terminus is blocked possibly by pyroglutamic acid.

It is found in the virion. The protein resides in the host endoplasmic reticulum lumen. Its function is as follows. Calcium-binding protein that interacts with rotavirus cell receptors once the initial attachment by VP4 has been achieved. Rotavirus attachment and entry into the host cell probably involves multiple sequential contacts between the outer capsid proteins VP4 and VP7, and the cell receptors. Following entry into the host cell, low intracellular or intravesicular Ca(2+) concentration probably causes the calcium-stabilized VP7 trimers to dissociate from the virion. This step is probably necessary for the membrane-disrupting entry step and the release of VP4, which is locked onto the virion by VP7. The sequence is that of Outer capsid glycoprotein VP7 from Bos taurus (Bovine).